We begin with the raw amino-acid sequence, 600 residues long: UvrABC system protein C (600 aa).

The 86-residue stretch at 15–100 (NSAGVYQYFN…IKQLHPKYNI (86 aa)) folds into the GIY-YIG domain. A UVR domain is found at 203–238 (SILIKNLEKQMLVLAQNENYEEAAKVRDQIVTIKDL).

The protein belongs to the UvrC family. In terms of assembly, interacts with UvrB in an incision complex.

The protein resides in the cytoplasm. In terms of biological role, the UvrABC repair system catalyzes the recognition and processing of DNA lesions. UvrC both incises the 5' and 3' sides of the lesion. The N-terminal half is responsible for the 3' incision and the C-terminal half is responsible for the 5' incision. The polypeptide is UvrABC system protein C (Campylobacter jejuni subsp. jejuni serotype O:6 (strain 81116 / NCTC 11828)).